The sequence spans 250 residues: DNA repair protein RecO (250 aa).

It belongs to the RecO family.

Functionally, involved in DNA repair and RecF pathway recombination. The protein is DNA repair protein RecO of Staphylococcus aureus (strain Mu3 / ATCC 700698).